A 342-amino-acid polypeptide reads, in one-letter code: Foldase protein PrsA (342 aa).

The first 22 residues, 1–22 (MVSVKKIVASALVGVLMFSAVG), serve as a signal peptide directing secretion. The N-palmitoyl cysteine moiety is linked to residue cysteine 23. A lipid anchor (S-diacylglycerol cysteine) is attached at cysteine 23. The PpiC domain maps to 190–284 (AKGVLARHLL…FGYHIIQAGA (95 aa)).

It belongs to the PrsA family.

The protein resides in the cell membrane. The enzyme catalyses [protein]-peptidylproline (omega=180) = [protein]-peptidylproline (omega=0). Plays a major role in protein secretion by helping the post-translocational extracellular folding of several secreted proteins. This is Foldase protein PrsA from Clostridium perfringens (strain SM101 / Type A).